The sequence spans 149 residues: Protein AIM7 (149 aa).

Ser2 carries the N-acetylserine modification. The ADF-H domain occupies 3 to 147; the sequence is NLYKIGTETR…DVEELREQLE (145 aa). The residue at position 137 (Ser137) is a Phosphoserine.

This sequence belongs to the actin-binding proteins ADF family. GMF subfamily.

The protein resides in the cytoplasm. It is found in the nucleus. In terms of biological role, may be involved in mitochondrial organization and biogenesis. In Saccharomyces cerevisiae (strain ATCC 204508 / S288c) (Baker's yeast), this protein is Protein AIM7 (AIM7).